Here is a 120-residue protein sequence, read N- to C-terminus: cAMP-responsive element-binding protein-like 2 (120 aa).

A disordered region spans residues 1–24 (MDDSKVVGGKVKKPGKRGRKPAKI). Basic residues predominate over residues 10–21 (KVKKPGKRGRKP). In terms of domain architecture, bZIP spans 23–86 (KIDLKAKLER…MAMDQGKIPS (64 aa)). Positions 29-60 (KLERSRQSARECRARKKLRYQYLEELVSSRER) are basic motif. A leucine-zipper region spans residues 62–69 (ICALREEL). The disordered stretch occupies residues 93–120 (TGEEQSKSQQNSSRHMKAGKTDANSNSW).

This sequence belongs to the bZIP family. ATF subfamily. As to quaternary structure, interacts with CREB1; regulates CREB1 phosphorylation, stability and transcriptional activity. Interacts with immediate-early (IE) protein BICP22 of bovine herpesvirus-1 (BHV-1). In terms of processing, phosphorylated by AMPK.

It is found in the nucleus. In terms of biological role, probable regulator of CREB1 transcriptional activity which is involved in adipose cells differentiation. May also play a regulatory role in the cell cycle. This Bos taurus (Bovine) protein is cAMP-responsive element-binding protein-like 2 (CREBL2).